Here is a 515-residue protein sequence, read N- to C-terminus: Maturase K (515 aa).

It belongs to the intron maturase 2 family. MatK subfamily.

Its subcellular location is the plastid. The protein resides in the chloroplast. Functionally, usually encoded in the trnK tRNA gene intron. Probably assists in splicing its own and other chloroplast group II introns. In Zingiber mioga (Myoga ginger), this protein is Maturase K.